The primary structure comprises 442 residues: Probable glycine dehydrogenase (decarboxylating) subunit 1 (442 aa).

The protein belongs to the GcvP family. N-terminal subunit subfamily. The glycine cleavage system is composed of four proteins: P, T, L and H. In this organism, the P 'protein' is a heterodimer of two subunits.

The catalysed reaction is N(6)-[(R)-lipoyl]-L-lysyl-[glycine-cleavage complex H protein] + glycine + H(+) = N(6)-[(R)-S(8)-aminomethyldihydrolipoyl]-L-lysyl-[glycine-cleavage complex H protein] + CO2. In terms of biological role, the glycine cleavage system catalyzes the degradation of glycine. The P protein binds the alpha-amino group of glycine through its pyridoxal phosphate cofactor; CO(2) is released and the remaining methylamine moiety is then transferred to the lipoamide cofactor of the H protein. This is Probable glycine dehydrogenase (decarboxylating) subunit 1 from Phenylobacterium zucineum (strain HLK1).